The chain runs to 355 residues: Tetraacyldisaccharide 4'-kinase (355 aa).

54 to 61 is a binding site for ATP; that stretch reads TVGGAGKT.

This sequence belongs to the LpxK family.

The enzyme catalyses a lipid A disaccharide + ATP = a lipid IVA + ADP + H(+). The protein operates within glycolipid biosynthesis; lipid IV(A) biosynthesis; lipid IV(A) from (3R)-3-hydroxytetradecanoyl-[acyl-carrier-protein] and UDP-N-acetyl-alpha-D-glucosamine: step 6/6. In terms of biological role, transfers the gamma-phosphate of ATP to the 4'-position of a tetraacyldisaccharide 1-phosphate intermediate (termed DS-1-P) to form tetraacyldisaccharide 1,4'-bis-phosphate (lipid IVA). The protein is Tetraacyldisaccharide 4'-kinase of Rhizobium rhizogenes (strain K84 / ATCC BAA-868) (Agrobacterium radiobacter).